The primary structure comprises 240 residues: Probable transcriptional regulatory protein YrbC (240 aa).

It belongs to the TACO1 family.

The protein localises to the cytoplasm. This is Probable transcriptional regulatory protein YrbC (yrbC) from Bacillus subtilis (strain 168).